The sequence spans 453 residues: Growth/differentiation factor 9 (453 aa).

Positions 1 to 25 (MALPNKFFLWFCCFAWLCFPISLDS) are cleaved as a signal peptide. Residues 26 to 318 (QPSRGEAQIV…EGVRLSRHRR (293 aa)) constitute a propeptide that is removed on maturation. Asn-106, Asn-163, Asn-236, Asn-255, and Asn-269 each carry an N-linked (GlcNAc...) asparagine glycan. Positions 281-300 (SLHPKRKPSQDPDQKRGLSA) are disordered. N-linked (GlcNAc...) asparagine glycosylation occurs at Asn-337. 3 cysteine pairs are disulfide-bonded: Cys-352–Cys-418, Cys-381–Cys-450, and Cys-385–Cys-452.

It belongs to the TGF-beta family. In terms of assembly, homodimer or heterodimer (Potential). But, in contrast to other members of this family, cannot be disulfide-linked. In terms of processing, phosphorylated; phosphorylation is critical for GDF9 function.

Its subcellular location is the secreted. Functionally, required for ovarian folliculogenesis. This is Growth/differentiation factor 9 (GDF9) from Bos taurus (Bovine).